The following is a 318-amino-acid chain: MKKLNLVALPHFVSVENLKNDEVKALIKRAEYFKKGGAVARLTSPVYVTNMFFEDSSRTHTSFEMAERKLGLTVIPFDPAHSSVNKGETLYDTSLVMNALGIDLEVIRHSQNEYYEDLINLKQHQKLNIGVINAGDGSGQHPSQCMLDMMTIHEHFGHFKGLKVAIVGDITNSRVAKSDMELLTKLGAEVYFSGPECWYSEEFDQYGKHEELDKLIPKMDVMMLLRVQHERHSGDPNEKKFDAHRYHEKYGINHKRYEAMKKDAIIMHPGPINHDVELSGDLVESDKCMFVRQMENGVFMRMAMLEAVLRGRKLGGLE.

2 residues coordinate carbamoyl phosphate: R58 and T59. L-aspartate is bound at residue K86. Residues R108, H141, and Q144 each coordinate carbamoyl phosphate. L-aspartate-binding residues include R174 and R226. 2 residues coordinate carbamoyl phosphate: G270 and P271.

Belongs to the aspartate/ornithine carbamoyltransferase superfamily. ATCase family. Heterododecamer (2C3:3R2) of six catalytic PyrB chains organized as two trimers (C3), and six regulatory PyrI chains organized as three dimers (R2).

The enzyme catalyses carbamoyl phosphate + L-aspartate = N-carbamoyl-L-aspartate + phosphate + H(+). Its pathway is pyrimidine metabolism; UMP biosynthesis via de novo pathway; (S)-dihydroorotate from bicarbonate: step 2/3. Its function is as follows. Catalyzes the condensation of carbamoyl phosphate and aspartate to form carbamoyl aspartate and inorganic phosphate, the committed step in the de novo pyrimidine nucleotide biosynthesis pathway. In Lactobacillus delbrueckii subsp. bulgaricus (strain ATCC BAA-365 / Lb-18), this protein is Aspartate carbamoyltransferase catalytic subunit.